Reading from the N-terminus, the 420-residue chain is Multifunctional CCA protein (420 aa).

Residues Gly8 and Arg11 each coordinate ATP. Residues Gly8 and Arg11 each contribute to the CTP site. Positions 21 and 23 each coordinate Mg(2+). Residues Arg91, Arg137, and Arg140 each coordinate ATP. CTP-binding residues include Arg91, Arg137, and Arg140. Residues 228–334 (TFVHTMLVLQ…LKLFNRLDVW (107 aa)) form the HD domain.

This sequence belongs to the tRNA nucleotidyltransferase/poly(A) polymerase family. Bacterial CCA-adding enzyme type 1 subfamily. In terms of assembly, monomer. Can also form homodimers and oligomers. Mg(2+) is required as a cofactor. It depends on Ni(2+) as a cofactor.

The catalysed reaction is a tRNA precursor + 2 CTP + ATP = a tRNA with a 3' CCA end + 3 diphosphate. It carries out the reaction a tRNA with a 3' CCA end + 2 CTP + ATP = a tRNA with a 3' CCACCA end + 3 diphosphate. In terms of biological role, catalyzes the addition and repair of the essential 3'-terminal CCA sequence in tRNAs without using a nucleic acid template. Adds these three nucleotides in the order of C, C, and A to the tRNA nucleotide-73, using CTP and ATP as substrates and producing inorganic pyrophosphate. tRNA 3'-terminal CCA addition is required both for tRNA processing and repair. Also involved in tRNA surveillance by mediating tandem CCA addition to generate a CCACCA at the 3' terminus of unstable tRNAs. While stable tRNAs receive only 3'-terminal CCA, unstable tRNAs are marked with CCACCA and rapidly degraded. This Pasteurella multocida (strain Pm70) protein is Multifunctional CCA protein.